Reading from the N-terminus, the 29-residue chain is MKTKFVFDLLTPDDILHPSNHVNLIIRPI.

The protein belongs to the coronaviruses ns4.9 protein family.

This is Truncated non-structural protein of 4.9 kDa from Bovine coronavirus (strain 98TXSF-110-ENT) (BCoV-ENT).